Consider the following 405-residue polypeptide: Opine dehydrogenase (405 aa).

This sequence belongs to the lysopine/nopaline/octopine/opine/vitopine dehydrogenases family.

This Haliotis discus hannai (Japanese abalone) protein is Opine dehydrogenase.